The sequence spans 292 residues: MGNQLDRITHLNYSELPTGDPSGIEKDELRVGVAYFFSDEEEDLDERGQPDKFGVKGPPGCSPCPESPSRHHHHLLHQLVLNETQFSAFRGQECIFSKVTGGPQGADLSVYAVTALPAICEPGDLLELLWLQPATEQPAPAPHWAVYVGGGQVIHLHQGEIRQDSLYQAGAANVGRVVNSWYRYRPLVAELVVQNACGHLGLKSEEICWTNSESFAAWCRFGKREFKAGGEVPAGTQPPQQQYYLKVHLEENKVHTARFHSLEDLIREKRRIDASGRLRVLQELEDFVDDKE.

A Phosphoserine modification is found at Ser38. One can recognise an LRAT domain in the interval 133 to 228 (PATEQPAPAP…CRFGKREFKA (96 aa)).

It belongs to the LRATD family.

The protein resides in the cytoplasm. Functionally, may play a role in cell morphology and motility. This is Protein LRATD1 from Mus musculus (Mouse).